Reading from the N-terminus, the 189-residue chain is Threonylcarbamoyl-AMP synthase (189 aa).

The YrdC-like domain maps to 6-189 (SPAFESVLTA…ALTGELYRQG (184 aa)).

It belongs to the SUA5 family. TsaC subfamily.

The protein localises to the cytoplasm. It catalyses the reaction L-threonine + hydrogencarbonate + ATP = L-threonylcarbamoyladenylate + diphosphate + H2O. In terms of biological role, required for the formation of a threonylcarbamoyl group on adenosine at position 37 (t(6)A37) in tRNAs that read codons beginning with adenine. Catalyzes the conversion of L-threonine, HCO(3)(-)/CO(2) and ATP to give threonylcarbamoyl-AMP (TC-AMP) as the acyladenylate intermediate, with the release of diphosphate. The chain is Threonylcarbamoyl-AMP synthase from Photorhabdus laumondii subsp. laumondii (strain DSM 15139 / CIP 105565 / TT01) (Photorhabdus luminescens subsp. laumondii).